Reading from the N-terminus, the 206-residue chain is MLSMFMCNNIVDYVDDIDNGIVQDIEDEASNNVDHDYVYPLPENMVYRFDKSTNILDYLSTERDHVMMAVRYYMSKQRLDDLYRQLPTKTRSYIDIINIYCDKVSNDYNRDMNIMYDMASTKSFTVYDINNEVNTILMDNKGLGVRLATISFITELGRRCMNPVKTIKMFTLLSHTICDDCFVDYITDISPPDNTIPNTSTREYLK.

The protein belongs to the orthopoxvirus OPG045 family. Homodimer. Interacts with host pro-apoptotic protein BCL2L11 (via BH3 domain). Interacts with host NLRP1. Interacts with host BAK.

The protein resides in the host mitochondrion outer membrane. It localises to the host cytoplasm. In terms of biological role, plays a role in evading host innate immune response by inhibiting host inflammasome activation. Interacts with and inhibits NLR-mediated interleukin-1 beta/IL1B production in infected cells. At the host mitochondria outer membrane, interacts with the BH3 domain of host BAK and prevents BAK from binding active BAX. In turn, host apoptosis is inhibited. This chain is Apoptosis regulator OPG045 (OPG045), found in Vaccinia virus (strain L-IVP) (VACV).